We begin with the raw amino-acid sequence, 62 residues long: Large ribosomal subunit protein uL30 (62 aa).

Belongs to the universal ribosomal protein uL30 family. Part of the 50S ribosomal subunit.

The protein is Large ribosomal subunit protein uL30 of Pseudoalteromonas atlantica (strain T6c / ATCC BAA-1087).